A 351-amino-acid polypeptide reads, in one-letter code: DNA polymerase IV (351 aa).

The 182-residue stretch at 4–185 (IIHVDMDCFF…LPLAKIPGVG (182 aa)) folds into the UmuC domain. Residues Asp8 and Asp103 each coordinate Mg(2+). Residue Glu104 is part of the active site.

Belongs to the DNA polymerase type-Y family. Monomer. Mg(2+) serves as cofactor.

The protein resides in the cytoplasm. The enzyme catalyses DNA(n) + a 2'-deoxyribonucleoside 5'-triphosphate = DNA(n+1) + diphosphate. In terms of biological role, poorly processive, error-prone DNA polymerase involved in untargeted mutagenesis. Copies undamaged DNA at stalled replication forks, which arise in vivo from mismatched or misaligned primer ends. These misaligned primers can be extended by PolIV. Exhibits no 3'-5' exonuclease (proofreading) activity. May be involved in translesional synthesis, in conjunction with the beta clamp from PolIII. The chain is DNA polymerase IV (dinB) from Escherichia coli O6:H1 (strain CFT073 / ATCC 700928 / UPEC).